Here is a 273-residue protein sequence, read N- to C-terminus: Non-homologous end joining protein Ku (273 aa).

One can recognise a Ku domain in the interval A10–K193. Positions F111–P273 are sufficient for interaction with LigD.

Belongs to the prokaryotic Ku family. Homodimer. Interacts with LigD.

With LigD forms a non-homologous end joining (NHEJ) DNA repair enzyme, which repairs dsDNA breaks with reduced fidelity. Binds linear dsDNA with 5'- and 3'- overhangs but not closed circular dsDNA nor ssDNA. Recruits and stimulates the ligase activity of LigD. In Mycobacterium tuberculosis (strain CDC 1551 / Oshkosh), this protein is Non-homologous end joining protein Ku (mku).